The sequence spans 124 residues: UPF0344 protein OB1184 (124 aa).

4 helical membrane-spanning segments follow: residues 3-23 (HMHITSWALGLILFIIALVMY), 33-53 (IIHMILRLMFILIIITGGILT), 62-82 (MPILGEALVKALAGLWLVAMM), and 104-124 (IALVLVIVLGFFRLPMGFLFI).

It belongs to the UPF0344 family.

The protein localises to the cell membrane. The sequence is that of UPF0344 protein OB1184 from Oceanobacillus iheyensis (strain DSM 14371 / CIP 107618 / JCM 11309 / KCTC 3954 / HTE831).